Consider the following 446-residue polypeptide: Glucose-6-phosphate isomerase (446 aa).

The active-site Proton donor is the Glu288. Residues His309 and Lys423 contribute to the active site.

The protein belongs to the GPI family.

The protein resides in the cytoplasm. The catalysed reaction is alpha-D-glucose 6-phosphate = beta-D-fructose 6-phosphate. It functions in the pathway carbohydrate biosynthesis; gluconeogenesis. The protein operates within carbohydrate degradation; glycolysis; D-glyceraldehyde 3-phosphate and glycerone phosphate from D-glucose: step 2/4. Its function is as follows. Catalyzes the reversible isomerization of glucose-6-phosphate to fructose-6-phosphate. The protein is Glucose-6-phosphate isomerase of Lactobacillus delbrueckii subsp. bulgaricus (strain ATCC 11842 / DSM 20081 / BCRC 10696 / JCM 1002 / NBRC 13953 / NCIMB 11778 / NCTC 12712 / WDCM 00102 / Lb 14).